The sequence spans 858 residues: MASERPREPDGEDSIKLSADVKPFVPKFAGLNVAWSESSETRVFPGCAATYYPFVQEPPAAEQKMYPEDMAFGAPTFPAQYVSSEIALHPFAYPTYTLESAQSVCSVPTLQYDYSQARCHPGFRTAKPRHEHVCPPPQEAKGVFKKKPSDERRACEEQKSSSRRADNAVPCEARPARGSSHLSSRTESSLKSDGYHKRPDRKSRILAKSASTSKPEFEFSRLDFPELQSPKNSNMPETQKPPRWGPLGPAASNMPLLGDVGKPVADMVEGKMVKSDHTDGAVTSNATTSSPSCTQELSWTPMGYIVRQTVSSDSAAATENVTSMINLKKTTSSADAKNVSVTSEALSSNPSYNREKRVYPAPKAKASQGGELEQNESSKKNKKKKEKSKPSYEVLTVQEPPRIEDAEEFPNLSVASERRHRGQSPKLHSKQQTQNEFKTSGKKSQVPVQLDLGGMLAALEKQQQQQHASHAKPSSRPVVFSVGAVPVLSKDASSSERGRRSSQMKTPHNPLDSSAPLMKKGKQREIPKAKKPTSLKKIILKERQERMQQRLQESAVSLTVASDDSQDVESGASNQTPSQDNPTGPEKTEESVSSTPVVEGESEEPAGTEFQRDPEACQPAPDSATFPKIHSRRFRDYCSQMLSKEVDACVTGLLKELVRFQDRMYQKDPVKAKTKRRLVLGLREVLKHLKLRKLKCIIISPNCEKTQSKGGLDDTLHTIIDCACEQNIPFVFALNRKALGRSLNKAVPVSIVGIFSYDGAQDQFHKMVELTMAARQAYKTMLETMRQEQAGEPGPQSPPSPPMQDPIPSTEEGTLPSTGEEPHYIEIWKKHLEAYSQRALELEDSLEASTSQMMNLNL.

3 disordered regions span residues 127 to 261 (KPRH…GDVG), 275 to 296 (SDHT…CTQE), and 327 to 625 (LKKT…DSAT). Composition is skewed to basic and acidic residues over residues 147–166 (KPSD…RRAD), 188–197 (SSLKSDGYHK), and 215–224 (PEFEFSRLDF). Polar residues-rich tracts occupy residues 281–296 (AVTS…CTQE) and 327–352 (LKKT…NPSY). Residues 380–387 (KNKKKKEK) carry the Nuclear localization signal motif. A compositionally biased stretch (basic residues) spans 418-429 (RRHRGQSPKLHS). Residues 430–447 (KQQTQNEFKTSGKKSQVP) are compositionally biased toward polar residues. Basic and acidic residues predominate over residues 539–548 (ILKERQERMQ). 2 stretches are compositionally biased toward polar residues: residues 554–563 (SAVSLTVASD) and 571–582 (GASNQTPSQDNP). Residues 678–699 (LVLGLREVLKHLKLRKLKCIII) are RNA-binding. The interval 785-819 (MRQEQAGEPGPQSPPSPPMQDPIPSTEEGTLPSTG) is disordered. The segment covering 795 to 805 (PQSPPSPPMQD) has biased composition (pro residues).

It is found in the cytoplasm. It localises to the nucleus. MRNA-binding protein that binds to the SECIS (selenocysteine insertion sequence) element present in the 3'-UTR of mRNAs encoding selenoproteins and facilitates the incorporation of the rare amino acid selenocysteine. Insertion of selenocysteine at UGA codons is mediated by SECISBP2 and EEFSEC: SECISBP2 (1) specifically binds the SECIS sequence once the 80S ribosome encounters an in-frame UGA codon and (2) contacts the RPS27A/eS31 of the 40S ribosome before ribosome stalling. (3) GTP-bound EEFSEC then delivers selenocysteinyl-tRNA(Sec) to the 80S ribosome and adopts a preaccommodated state conformation. (4) After GTP hydrolysis, EEFSEC dissociates from the assembly, selenocysteinyl-tRNA(Sec) accommodates, and peptide bond synthesis and selenoprotein elongation occur. In Mus musculus (Mouse), this protein is Selenocysteine insertion sequence-binding protein 2.